Here is a 323-residue protein sequence, read N- to C-terminus: DNA primase small subunit PriS (323 aa).

Residues D97, D99, and D274 contribute to the active site.

Belongs to the eukaryotic-type primase small subunit family. In terms of assembly, heterodimer of a small subunit (PriS) and a large subunit (PriL). Mg(2+) is required as a cofactor. Mn(2+) serves as cofactor.

Functionally, catalytic subunit of DNA primase, an RNA polymerase that catalyzes the synthesis of short RNA molecules used as primers for DNA polymerase during DNA replication. The small subunit contains the primase catalytic core and has DNA synthesis activity on its own. Binding to the large subunit stabilizes and modulates the activity, increasing the rate of DNA synthesis while decreasing the length of the DNA fragments, and conferring RNA synthesis capability. The DNA polymerase activity may enable DNA primase to also catalyze primer extension after primer synthesis. May also play a role in DNA repair. The protein is DNA primase small subunit PriS of Methanothermobacter thermautotrophicus (strain ATCC 29096 / DSM 1053 / JCM 10044 / NBRC 100330 / Delta H) (Methanobacterium thermoautotrophicum).